Reading from the N-terminus, the 649-residue chain is Replication protein E1 (649 aa).

The Nuclear localization signal signature appears at 83–85 (KRK). Phosphoserine; by host occurs at positions 89, 93, and 107. The short motif at 106 to 115 (ISPRLDAIKL) is the Nuclear export signal element. The tract at residues 146–188 (TQVEKHGDPENGGDGQERDTGRDIEGEGVEHREAEAVDDSTRE) is disordered. Residues 148-188 (VEKHGDPENGGDGQERDTGRDIEGEGVEHREAEAVDDSTRE) are compositionally biased toward basic and acidic residues. The interval 187 to 353 (REHADTSGIL…QTVIEHSLAD (167 aa)) is DNA-binding region. An SF3 helicase domain is found at 452–602 (IEFIPFLSKL…FPFDRNGNAV (151 aa)). 478 to 485 (GPPDTGKS) provides a ligand contact to ATP. Lys-559 participates in a covalent cross-link: Glycyl lysine isopeptide (Lys-Gly) (interchain with G-Cter in SUMO).

The protein belongs to the papillomaviridae E1 protein family. As to quaternary structure, can form hexamers. Interacts with E2 protein; this interaction increases E1 DNA binding specificity. Interacts with host DNA polymerase subunit POLA2. Interacts with host single stranded DNA-binding protein RPA1. Interacts with host TOP1; this interaction stimulates the enzymatic activity of TOP1. Phosphorylated. In terms of processing, sumoylated.

It is found in the host nucleus. It catalyses the reaction Couples ATP hydrolysis with the unwinding of duplex DNA by translocating in the 3'-5' direction.. The enzyme catalyses ATP + H2O = ADP + phosphate + H(+). Its function is as follows. ATP-dependent DNA 3'-5' helicase required for initiation of viral DNA replication. It forms a complex with the viral E2 protein. The E1-E2 complex binds to the replication origin which contains binding sites for both proteins. During the initial step, a dimer of E1 interacts with a dimer of protein E2 leading to a complex that binds the viral origin of replication with high specificity. Then, a second dimer of E1 displaces the E2 dimer in an ATP-dependent manner to form the E1 tetramer. Following this, two E1 monomers are added to each half of the site, which results in the formation of two E1 trimers on the viral ori. Subsequently, two hexamers will be created. The double hexamer acts as a bi-directional helicase machinery and unwinds the viral DNA and then recruits the host DNA polymerase to start replication. In Human papillomavirus 11, this protein is Replication protein E1.